We begin with the raw amino-acid sequence, 326 residues long: N-acetyl-gamma-glutamyl-phosphate reductase (326 aa).

Cysteine 155 is a catalytic residue.

It belongs to the NAGSA dehydrogenase family. Type 1 subfamily.

It localises to the cytoplasm. The catalysed reaction is N-acetyl-L-glutamate 5-semialdehyde + phosphate + NADP(+) = N-acetyl-L-glutamyl 5-phosphate + NADPH + H(+). It functions in the pathway amino-acid biosynthesis; L-arginine biosynthesis; N(2)-acetyl-L-ornithine from L-glutamate: step 3/4. In terms of biological role, catalyzes the NADPH-dependent reduction of N-acetyl-5-glutamyl phosphate to yield N-acetyl-L-glutamate 5-semialdehyde. The sequence is that of N-acetyl-gamma-glutamyl-phosphate reductase from Shewanella baltica (strain OS155 / ATCC BAA-1091).